A 114-amino-acid chain; its full sequence is C-X-C motif chemokine 6 (114 aa).

The signal sequence occupies residues 1–37 (MSLPSSRAARVPGPSGSLCALLALLLLLTPPGPLASA). Cystine bridges form between Cys-49/Cys-75 and Cys-51/Cys-91.

The protein belongs to the intercrine alpha (chemokine CxC) family.

Its subcellular location is the secreted. Chemotactic for neutrophil granulocytes. Signals through binding and activation of its receptors (CXCR1 and CXCR2). In addition to its chemotactic and angiogenic properties, it has strong antibacterial activity against Gram-positive and Gram-negative bacteria (90-fold-higher when compared to CXCL5 and CXCL7). The sequence is that of C-X-C motif chemokine 6 (CXCL6) from Homo sapiens (Human).